Reading from the N-terminus, the 242-residue chain is MMMDLFETGSYFFYLDGENVTLQPLEVAEGSPLYPGSDGTLSPCQDQMPPEAGSDSSGEEHVLAPPGLQPPHCPGQCLIWACKTCKRKSAPTDRRKAATLRERRRLKKINEAFEALKRRTVANPNQRLPKVEILRSAINYIERLQDLLHRLDQQDKMQELGVDPFSYRPKQENLEGADFLRTCSSQWPSVSDHSRGLVITAKEGGTSIDSSASSSLRCLSSIVDSISSEEHKLPCVEEVVEK.

Positions 31–63 (SPLYPGSDGTLSPCQDQMPPEAGSDSSGEEHVL) are disordered. A bHLH domain is found at 93–144 (DRRKAATLRERRRLKKINEAFEALKRRTVANPNQRLPKVEILRSAINYIERL).

As to quaternary structure, efficient DNA binding requires dimerization with another bHLH protein. Interacts with CSRP3.

The protein resides in the nucleus. In terms of biological role, involved in muscle differentiation (myogenic factor). Induces fibroblasts to differentiate into myoblasts. Probable sequence specific DNA-binding protein. In Bos taurus (Bovine), this protein is Myogenic factor 6 (MYF6).